Here is a 316-residue protein sequence, read N- to C-terminus: Metal tolerance protein 8 (316 aa).

The Cytoplasmic segment spans residues 1–15 (MGPVRHILNERKSRK). The helical transmembrane segment at 16–36 (IAAFLLINTAYMFVEFTSGFM) threads the bilayer. Over 37-45 (SDSLGLISD) the chain is Vacuolar. Residues 46–66 (ACHMLFDCAALAIGLYASYIA) form a helical membrane-spanning segment. Residues 67–80 (RLPANGLYNYGRGR) are Cytoplasmic-facing. A helical transmembrane segment spans residues 81–101 (FEVLSGYVNAVFLVLVGALIV). At 102–116 (LESFERILEPREIST) the chain is on the vacuolar side. The helical transmembrane segment at 117–137 (SSLLTVSIGGLVVNVIGLVFF) threads the bilayer. Residues 138-176 (HEEHHHAHGEAHSCNGGLQSSENHNKSRNRHHIDHNMEG) lie on the Cytoplasmic side of the membrane. The segment at 147-166 (EAHSCNGGLQSSENHNKSRN) is disordered. The chain crosses the membrane as a helical span at residues 177 to 197 (IFLHVLADTMGSVGVVISTLL). The Vacuolar portion of the chain corresponds to 198-202 (IKYKG). The helical transmembrane segment at 203 to 223 (WLIADPICSVFISIMIVSSVL) threads the bilayer. Topologically, residues 224–316 (PLLRNSAEIL…LTIQIECVKR (93 aa)) are cytoplasmic.

The protein belongs to the cation diffusion facilitator (CDF) transporter (TC 2.A.4) family. SLC30A subfamily.

It localises to the vacuole membrane. Its function is as follows. Involved in sequestration of excess metal in the cytoplasm into vacuoles to maintain metal homeostasis. This is Metal tolerance protein 8 (MTP8) from Oryza sativa subsp. japonica (Rice).